The sequence spans 470 residues: UDP-N-acetylmuramate--L-alanine ligase (470 aa).

Position 118 to 124 (118 to 124 (GTHGKTT)) interacts with ATP.

The protein belongs to the MurCDEF family.

The protein resides in the cytoplasm. The catalysed reaction is UDP-N-acetyl-alpha-D-muramate + L-alanine + ATP = UDP-N-acetyl-alpha-D-muramoyl-L-alanine + ADP + phosphate + H(+). It functions in the pathway cell wall biogenesis; peptidoglycan biosynthesis. Its function is as follows. Cell wall formation. This is UDP-N-acetylmuramate--L-alanine ligase from Cereibacter sphaeroides (strain ATCC 17025 / ATH 2.4.3) (Rhodobacter sphaeroides).